An 88-amino-acid chain; its full sequence is Putative defensin-like protein 264 (88 aa).

Positions 1–26 (MEKMVLRKVVLLAILLSLSCLWVAKA) are cleaved as a signal peptide. Intrachain disulfides connect C47–C65, C53–C70, and C57–C72.

Belongs to the DEFL family.

The protein localises to the secreted. The polypeptide is Putative defensin-like protein 264 (Arabidopsis thaliana (Mouse-ear cress)).